The chain runs to 214 residues: Ras-like protein 2 (214 aa).

Residues 19 to 24 (GVGKSC), 35 to 41 (VDEYDPT), 65 to 66 (AG), 122 to 125 (NKCD), and 152 to 154 (SAK) contribute to the GTP site. The Effector region motif lies at 38–46 (YDPTIEDSY). A disordered region spans residues 178–197 (QGYSTGSGGSNAGGPSNKME). Position 211 is a cysteine methyl ester (Cys-211). A lipid anchor (S-farnesyl cysteine) is attached at Cys-211. A propeptide spans 212 to 214 (VLM) (removed in mature form).

The protein belongs to the small GTPase superfamily. Ras family. Interacts with farnesyltransferase beta subunit RAM1.

The protein resides in the cell membrane. Its activity is regulated as follows. Alternates between an inactive form bound to GDP and an active form bound to GTP. Activated by a guanine nucleotide-exchange factor (GEF) and inactivated by a GTPase-activating protein (GAP). Modulates the activity of the adenylate cyclase catalytic subunit and therefore affects the biosynthesis of cyclic-AMP. Plays a role in both surface attachment and surface recognition of appressoria, a highly specialized infection structure for plant penetration. Regulates appressorium formation by coordinated regulation of cAMP signaling and Pmk1 MAPK pathways. The protein is Ras-like protein 2 of Pyricularia oryzae (strain 70-15 / ATCC MYA-4617 / FGSC 8958) (Rice blast fungus).